Here is a 339-residue protein sequence, read N- to C-terminus: N-acetyl-gamma-glutamyl-phosphate reductase (339 aa).

Cysteine 145 is a catalytic residue.

This sequence belongs to the NAGSA dehydrogenase family. Type 1 subfamily.

The protein localises to the cytoplasm. It catalyses the reaction N-acetyl-L-glutamate 5-semialdehyde + phosphate + NADP(+) = N-acetyl-L-glutamyl 5-phosphate + NADPH + H(+). The protein operates within amino-acid biosynthesis; L-arginine biosynthesis; N(2)-acetyl-L-ornithine from L-glutamate: step 3/4. Functionally, catalyzes the NADPH-dependent reduction of N-acetyl-5-glutamyl phosphate to yield N-acetyl-L-glutamate 5-semialdehyde. In Thermotoga petrophila (strain ATCC BAA-488 / DSM 13995 / JCM 10881 / RKU-1), this protein is N-acetyl-gamma-glutamyl-phosphate reductase.